We begin with the raw amino-acid sequence, 123 residues long: Small ribosomal subunit protein cS23 (123 aa).

Belongs to the chloroplast-specific ribosomal protein cS23 family. Part of the 30S ribosomal subunit.

The protein resides in the plastid. It localises to the chloroplast. Probably a ribosomal protein or a ribosome-associated protein. This chain is Small ribosomal subunit protein cS23 (ycf65), found in Mesostigma viride (Green alga).